The sequence spans 308 residues: Methionine synthase (308 aa).

Positions 201, 203, 224, and 285 each coordinate Zn(2+).

Belongs to the archaeal MetE family. The cofactor is Zn(2+).

The protein operates within amino-acid biosynthesis; L-methionine biosynthesis via de novo pathway. Its function is as follows. Catalyzes the transfer of a methyl group to L-homocysteine resulting in methionine formation. Can use methylcobalamin and methylcobinamide as methyl donors, but methylcobalamin is not considered to be the physiological substrate. The chain is Methionine synthase from Methanothermobacter thermautotrophicus (strain ATCC 29096 / DSM 1053 / JCM 10044 / NBRC 100330 / Delta H) (Methanobacterium thermoautotrophicum).